The sequence spans 81 residues: Photosystem I iron-sulfur center (81 aa).

4Fe-4S ferredoxin-type domains lie at 2–31 and 39–68; these read SHTV…MVPW and IASA…VRVY. [4Fe-4S] cluster-binding residues include cysteine 11, cysteine 14, cysteine 17, cysteine 21, cysteine 48, cysteine 51, cysteine 54, and cysteine 58.

The eukaryotic PSI reaction center is composed of at least 11 subunits. [4Fe-4S] cluster serves as cofactor.

Its subcellular location is the plastid. The protein localises to the chloroplast thylakoid membrane. It catalyses the reaction reduced [plastocyanin] + hnu + oxidized [2Fe-2S]-[ferredoxin] = oxidized [plastocyanin] + reduced [2Fe-2S]-[ferredoxin]. Functionally, apoprotein for the two 4Fe-4S centers FA and FB of photosystem I (PSI); essential for photochemical activity. FB is the terminal electron acceptor of PSI, donating electrons to ferredoxin. The C-terminus interacts with PsaA/B/D and helps assemble the protein into the PSI complex. Required for binding of PsaD and PsaE to PSI. PSI is a plastocyanin/cytochrome c6-ferredoxin oxidoreductase, converting photonic excitation into a charge separation, which transfers an electron from the donor P700 chlorophyll pair to the spectroscopically characterized acceptors A0, A1, FX, FA and FB in turn. The protein is Photosystem I iron-sulfur center of Chlorella vulgaris (Green alga).